The chain runs to 403 residues: tRNA pseudouridine synthase D (403 aa).

The segment covering Met1 to Ile10 has biased composition (basic and acidic residues). Residues Met1–Gln24 form a disordered region. Asp92 functions as the Nucleophile in the catalytic mechanism. Positions Gly192 to Leu354 constitute a TRUD domain. Residues Ala217–Asn240 are disordered.

It belongs to the pseudouridine synthase TruD family.

The catalysed reaction is uridine(13) in tRNA = pseudouridine(13) in tRNA. Its function is as follows. Responsible for synthesis of pseudouridine from uracil-13 in transfer RNAs. The polypeptide is tRNA pseudouridine synthase D (Psychrobacter arcticus (strain DSM 17307 / VKM B-2377 / 273-4)).